Here is a 515-residue protein sequence, read N- to C-terminus: Maturase K (515 aa).

The protein belongs to the intron maturase 2 family. MatK subfamily.

It is found in the plastid. Its subcellular location is the chloroplast. In terms of biological role, usually encoded in the trnK tRNA gene intron. Probably assists in splicing its own and other chloroplast group II introns. This is Maturase K from Pinus coulteri (Coulter pine).